Consider the following 341-residue polypeptide: Cell wall mannoprotein PIR1 (341 aa).

The signal sequence occupies residues 1-18 (MQYKKSLVASALVTTSLA). Positions 19-63 (AYAPKDPWSTLTPSATYKGGITDYSSTFGIAVEPIATTASSKAKR) are excised as a propeptide. PIR1/2/3 repeat units follow at residues 64–82 (AAAISQIGDGQIQATTKTT), 83–101 (AAAVSQIGDGQIQATTKTK), 102–120 (AAAVSQIGDGQIQATTKTT), 126–144 (AAAVSQIGDGQIQATTKTK), 145–163 (AAAVSQIGDGQIQATTKTT), 164–182 (AAAVSQIGDGQIQATTKTT), 183–201 (AAAVSQIGDGQIQATTNTT), and 202–220 (VAPVSQITDGQIQATTLTS).

The protein belongs to the PIR protein family. Post-translationally, covalently linked to beta-1,3-glucan of the inner cell wall layer via an alkali-sensitive ester linkage between the gamma-carboxyl group of glutamic acids, arising from specific glutamines within the PIR1/2/3 repeats, and hydroxyl groups of glucoses of beta-1,3-glucan chains. In terms of processing, O-glycosylated. Extensively O-mannosylated.

Its subcellular location is the secreted. It localises to the cell wall. Component of the outer cell wall layer. Required for stability of the cell wall and for optimal growth. Required for resistance against several antifungal and cell wall-perturbing agents and for tolerance to heat shock. The chain is Cell wall mannoprotein PIR1 (PIR1) from Saccharomyces cerevisiae (strain RM11-1a) (Baker's yeast).